A 268-amino-acid polypeptide reads, in one-letter code: Ribosomal RNA large subunit methyltransferase E (268 aa).

The tract at residues 1-60 (MKPPRSRSGSSKDTGPKRIPGKALKSASNPGENDATLDSATARTARNKTVSLRTARGRTT) is disordered. Over residues 26–52 (SASNPGENDATLDSATARTARNKTVSL) the composition is skewed to polar residues. Residues G115, W117, D133, D149, and D173 each coordinate S-adenosyl-L-methionine. The active-site Proton acceptor is the K213.

The protein belongs to the class I-like SAM-binding methyltransferase superfamily. RNA methyltransferase RlmE family.

It localises to the cytoplasm. The enzyme catalyses uridine(2552) in 23S rRNA + S-adenosyl-L-methionine = 2'-O-methyluridine(2552) in 23S rRNA + S-adenosyl-L-homocysteine + H(+). In terms of biological role, specifically methylates the uridine in position 2552 of 23S rRNA at the 2'-O position of the ribose in the fully assembled 50S ribosomal subunit. This is Ribosomal RNA large subunit methyltransferase E from Gluconobacter oxydans (strain 621H) (Gluconobacter suboxydans).